A 350-amino-acid polypeptide reads, in one-letter code: FAD:protein FMN transferase (350 aa).

The signal sequence occupies residues Met1–Gly19. Residue Cys20 is the site of N-palmitoyl cysteine attachment. A lipid anchor (S-diacylglycerol cysteine) is attached at Cys20. Residues Met41, Trp78, Ala119–Asp121, and Asp181 contribute to the FAD site. Mg(2+) is bound at residue Thr184. Glu187 and Ile272 together coordinate FAD. Mg(2+) contacts are provided by Asp298, Asp301, and Thr302.

Belongs to the ApbE family. Mg(2+) is required as a cofactor.

The protein localises to the cell inner membrane. The enzyme catalyses L-threonyl-[protein] + FAD = FMN-L-threonyl-[protein] + AMP + H(+). In terms of biological role, flavin transferase that catalyzes the transfer of the FMN moiety of FAD and its covalent binding to the hydroxyl group of a threonine residue in a target flavoprotein such as NqrB and NqrC, two subunits of the NQR complex. The chain is FAD:protein FMN transferase from Klebsiella pneumoniae (strain 342).